The sequence spans 181 residues: HGPRTase-like protein 2 (181 aa).

This sequence belongs to the purine/pyrimidine phosphoribosyltransferase family. Archaeal HPRT subfamily.

Functionally, may catalyze a purine salvage reaction, the substrate is unknown. The sequence is that of HGPRTase-like protein 2 from Haloterrigena turkmenica (strain ATCC 51198 / DSM 5511 / JCM 9101 / NCIMB 13204 / VKM B-1734 / 4k) (Halococcus turkmenicus).